The primary structure comprises 376 residues: NADPH oxidase organizer 1 (376 aa).

The region spanning 1–131 is the PX domain; sequence MAGPRYPVSV…GFFAPQPLDL (131 aa). SH3 domains follow at residues 163-225 and 237-296; these read LEAQ…EAAP and SSGP…PEGL. The tract at residues 302 to 376 is disordered; it reads GTGFRGGDDP…DSVPHPTTEQ (75 aa). Residues 326-335 are compositionally biased toward pro residues; sequence APPPTVPTRP. Positions 328–337 are proline-rich region; mediates mutually exclusive interactions with itself and NOXA1; sequence PPTVPTRPSP.

Interacts with NOX1, NOXA1, CYBA/p22phox and NCF2/p67phox. Interacts with SH3PXD2A and SH3PXD2B. In terms of tissue distribution, expressed in testis, small and large intestines, liver, kidney and pancreas. Isoform 3 is mainly expressed in colon. Isoform 1 is preferentially expressed in testis.

It is found in the cell membrane. Constitutively potentiates the superoxide-generating activity of NOX1 and NOX3 and is required for the biogenesis of otoconia/otolith, which are crystalline structures of the inner ear involved in the perception of gravity. Isoform 3 is more potent than isoform 1 in activating NOX3. Together with NOXA1, may also substitute to NCF1/p47phox and NCF2/p67phox in supporting the phagocyte NOX2/gp91phox superoxide-generating activity. The protein is NADPH oxidase organizer 1 (NOXO1) of Homo sapiens (Human).